A 425-amino-acid polypeptide reads, in one-letter code: MGNRIGGRRKAGVEERYTRPQGLYEHRDIDQKKLRKLILEAKLAPCYMGADDAAAAADLEECPICFLYYPSLNRSKCCSKGICTECFLQMKPTHTAQPTQCPFCKTPSYAVEYRGVKTKEERSIEQFEEQKVIEAQMRMRQQALQDEEDKMKRKQNRCSSSRTITPTKEVEYRDICSTSFSVPSYRCAEQETECCSSEPSCSAQTSMRPFHSRHNRDDNIDMNIEDMMVMEAIWRSIQEQGSIGNPVCGNFMPVTEPSPRERQPFVPAASLEIPHGGGFSCAVAAMAEHQPPSMDFSYMAGSSAFPVFDMFRRPCNIAGGSMCNLESSPESWSGIAPSCSREVVREEGECSADHWSEGAEAGTSYAGSDIVADAGTMPQLPFAENFAMAPSHFRPESIEEQMMFSMALSLADGHGRTHSQGLAWL.

The RING-type; degenerate zinc finger occupies 62–105; that stretch reads CPICFLYYPSLNRSKCCSKGICTECFLQMKPTHTAQPTQCPFCK.

Expressed in roots, shoots, leaves, inflorescence meristems, stamens, pistils, spikelet hulls and endosperms 4 days after fertilization.

The protein localises to the cytoplasm. It catalyses the reaction S-ubiquitinyl-[E2 ubiquitin-conjugating enzyme]-L-cysteine + [acceptor protein]-L-lysine = [E2 ubiquitin-conjugating enzyme]-L-cysteine + N(6)-ubiquitinyl-[acceptor protein]-L-lysine.. Its pathway is protein modification; protein ubiquitination. Functionally, E3 ubiquitin-protein ligase involved in the regulation of grain size. May limit grain width and weight by restricting cell proliferation of the spikelet hull. Possesses E3 ubiquitin-protein ligase activity in vitro. This Oryza sativa subsp. indica (Rice) protein is E3 ubiquitin-protein ligase GW2.